A 208-amino-acid polypeptide reads, in one-letter code: MQNVKLISHPLIEHKLTILRDKNTQPFQFRMLVDEISYLMIFEATRNLKVKDVKVQTPVALADAKRLTTKVMICPILRAALGMLDSVFTIIPDASVGFLGFQRNEETAQAEFFYAKLPKDAKERMAIIIDPMFATGGTAIDAVKFLREKGVKEIKFISIIAAPEGLKRFSEIYPDVEVYTASIDEKLNEKNYIVPGLGDAGDRVFNTL.

5-phospho-alpha-D-ribose 1-diphosphate-binding positions include Arg-78, Arg-103, and 130–138 (DPMFATGGT). Residues Ile-193 and 198 to 200 (GDA) contribute to the uracil site. Asp-199 is a binding site for 5-phospho-alpha-D-ribose 1-diphosphate.

It belongs to the UPRTase family. Mg(2+) is required as a cofactor.

The enzyme catalyses UMP + diphosphate = 5-phospho-alpha-D-ribose 1-diphosphate + uracil. It participates in pyrimidine metabolism; UMP biosynthesis via salvage pathway; UMP from uracil: step 1/1. Its activity is regulated as follows. Allosterically activated by GTP. Functionally, catalyzes the conversion of uracil and 5-phospho-alpha-D-ribose 1-diphosphate (PRPP) to UMP and diphosphate. The protein is Uracil phosphoribosyltransferase of Campylobacter concisus (strain 13826).